Here is a 137-residue protein sequence, read N- to C-terminus: Nucleoside diphosphate kinase (137 aa).

6 residues coordinate ATP: Lys10, Phe59, Arg87, Thr93, Arg104, and Asn114. The active-site Pros-phosphohistidine intermediate is the His117.

It belongs to the NDK family. In terms of assembly, homotetramer. The cofactor is Mg(2+).

It localises to the cytoplasm. The enzyme catalyses a 2'-deoxyribonucleoside 5'-diphosphate + ATP = a 2'-deoxyribonucleoside 5'-triphosphate + ADP. It catalyses the reaction a ribonucleoside 5'-diphosphate + ATP = a ribonucleoside 5'-triphosphate + ADP. Its function is as follows. Major role in the synthesis of nucleoside triphosphates other than ATP. The ATP gamma phosphate is transferred to the NDP beta phosphate via a ping-pong mechanism, using a phosphorylated active-site intermediate. This Streptomyces coelicolor (strain ATCC BAA-471 / A3(2) / M145) protein is Nucleoside diphosphate kinase.